Consider the following 201-residue polypeptide: Recombination protein RecR (201 aa).

The C4-type zinc finger occupies 60-75 (CKVCGNIDTQNPCTVC). In terms of domain architecture, Toprim spans 83-178 (SIIVVVADVA…KVTRLAHGVP (96 aa)).

It belongs to the RecR family.

Its function is as follows. May play a role in DNA repair. It seems to be involved in an RecBC-independent recombinational process of DNA repair. It may act with RecF and RecO. This Rhodopseudomonas palustris (strain BisB18) protein is Recombination protein RecR.